Consider the following 508-residue polypeptide: Probable G-protein coupled receptor 101 (508 aa).

Residues 1–35 are Extracellular-facing; it reads MTSTCTNSTRESNSSHTCMPLSKMPISLAHGIIRS. Residues N7 and N13 are each glycosylated (N-linked (GlcNAc...) asparagine). The chain crosses the membrane as a helical span at residues 36–56; the sequence is TVLVIFLAASFVGNIVLALVL. At 57–68 the chain is on the cytoplasmic side; the sequence is QRKPQLLQVTNR. A helical transmembrane segment spans residues 69 to 89; it reads FIFNLLVTDLLQISLVAPWVV. Residues 90–106 are Extracellular-facing; that stretch reads ATSVPLFWPLNSHFCTA. A disulfide bridge connects residues C104 and C182. The chain crosses the membrane as a helical span at residues 107–127; that stretch reads LVSLTHLFAFASVNTIVVVSV. Residues 128 to 149 lie on the Cytoplasmic side of the membrane; that stretch reads DRYLSIIHPLSYPSKMTQRRGY. A helical transmembrane segment spans residues 150-170; the sequence is LLLYGTWIVAILQSTPPLYGW. Topologically, residues 171–196 are extracellular; sequence GQAAFDERNALCSMIWGASPSYTILS. Residues 197-217 traverse the membrane as a helical segment; the sequence is VVSFIVIPLIVMIACYSVVFC. Over 218–399 the chain is Cytoplasmic; it reads AARRQHALLY…PRCYQCKAAK (182 aa). The tract at residues 244 to 338 is disordered; sequence NEDEEGAEKK…ENSMKADKGR (95 aa). 2 stretches are compositionally biased toward basic and acidic residues: residues 250 to 288 and 318 to 338; these read AEKK…KAKE and MEGK…DKGR. A helical transmembrane segment spans residues 400–420; it reads VIFIIIFSYVLSLGPYCFLAV. Topologically, residues 421 to 433 are extracellular; that stretch reads LAVWVDVETQVPQ. A helical membrane pass occupies residues 434 to 454; it reads WVITIIIWLFFLQCCIHPYVY. Over 455–508 the chain is Cytoplasmic; sequence GYMHKTIKKEIQDMLKKFFCKEKPPKEDSHPDLPGTEGGTEGKIVPSYDSATFP. The span at 476–485 shows a compositional bias: basic and acidic residues; that stretch reads EKPPKEDSHP. The tract at residues 476 to 508 is disordered; the sequence is EKPPKEDSHPDLPGTEGGTEGKIVPSYDSATFP.

The protein belongs to the G-protein coupled receptor 1 family.

The protein localises to the cell membrane. Its function is as follows. Orphan receptor. The protein is Probable G-protein coupled receptor 101 (GPR101) of Homo sapiens (Human).